The primary structure comprises 641 residues: MTVSKILKQIIDSQTTKNVVIGQLGLGSITKLKQLITLLAHHKDKQLTLKLFVDISDTSGILLANEELTTLLCPQGSISLTAIEGCQRVIVSNCKLTIDFYLGQYLTQLQALPMVNDGFVDGWHVTSDADQTQLRQILFWQLAKLSKNDAQFSLDDTFTEVSQLELYTQAEQVGLYRYADNIPGNIQSGDEICFQERAAMRAQSRALQAPYPICSAAVTTHATCSNLGIAIIGGGVASACLALSLAERGQQVTLFCEDHALAQAASGNKQGAIYPLLTPDNNTLSQYFQQAYLFSLQRLKSLAAQGHPIDFDLCGVVHTGHDERSRKRVAKIINGQNWQPSIARAITAEQASSIAGLKIDDGGIFYPMGGWVSPQDFTRAAFNQAKAIAGASLKLNTQITDIHYKDGGWELTSNTERFGSFKALILANGKSITQFPQTQYLQATGFRGQVSHVPSRAKLSKLSSVLCAHGYMTPSNNTLHCLGASYVKNAPNTDYCPNEQVENLHKIQHSYVGQEWVEDIDVSGHSARVGVRMVTRDHAPMMGPAPDIDSIMTLYQDHQLTPQSRKYWQSHNAPVHQGLYVLGGLGSRGLSSGPLAAESLAAQICGDLMPISRDFVALLNPNRMWMRKLLKGKALEVGVEV.

Residues 1-219 (MTVSKILKQI…PYPICSAAVT (219 aa)) form a tRNA (mnm(5)s(2)U34)-methyltransferase region. The FAD-dependent cmnm(5)s(2)U34 oxidoreductase stretch occupies residues 232 to 641 (IGGGVASACL…GKALEVGVEV (410 aa)).

In the N-terminal section; belongs to the methyltransferase superfamily. tRNA (mnm(5)s(2)U34)-methyltransferase family. The protein in the C-terminal section; belongs to the DAO family. FAD serves as cofactor.

It is found in the cytoplasm. It carries out the reaction 5-aminomethyl-2-thiouridine(34) in tRNA + S-adenosyl-L-methionine = 5-methylaminomethyl-2-thiouridine(34) in tRNA + S-adenosyl-L-homocysteine + H(+). In terms of biological role, catalyzes the last two steps in the biosynthesis of 5-methylaminomethyl-2-thiouridine (mnm(5)s(2)U) at the wobble position (U34) in tRNA. Catalyzes the FAD-dependent demodification of cmnm(5)s(2)U34 to nm(5)s(2)U34, followed by the transfer of a methyl group from S-adenosyl-L-methionine to nm(5)s(2)U34, to form mnm(5)s(2)U34. The polypeptide is tRNA 5-methylaminomethyl-2-thiouridine biosynthesis bifunctional protein MnmC (Shewanella pealeana (strain ATCC 700345 / ANG-SQ1)).